Consider the following 595-residue polypeptide: Protein UL31 (595 aa).

An N-terminal signal peptide occupies residues 1–23 (MGDKPTLVTLLTVAVSSPPPSSP). Residues 47-94 (TATSEVGEKTAEQEVAAADPETGNERRENRENEGGETRTTGTTAVKRS) are disordered. Basic and acidic residues predominate over residues 69–82 (GNERRENRENEGGE). 2 N-linked (GlcNAc...) asparagine; by host glycosylation sites follow: N176 and N197.

The protein belongs to the herpesviridae U10 family. As to quaternary structure, interacts with host CGAS.

Its subcellular location is the host cytoplasm. The protein resides in the host nucleus. In terms of biological role, plays a role in the inhibition of host innate immune system by targeting host CGAS and promoting dissociation of DNA from CGAS, thereby inhibiting the enzymatic activity of CGAS. The polypeptide is Protein UL31 (Homo sapiens (Human)).